The primary structure comprises 272 residues: Nuclear transcription factor Y subunit A-1 (272 aa).

Disordered regions lie at residues 1–20 and 34–106; these read MQSK…HAVQ and SFGV…PALS. Polar residues-rich tracts occupy residues 46–61 and 82–92; these read IPSN…GSES and KDSQAATSSRS. The Subunit association domain (SAD) motif lies at 175–198; the sequence is YVNAKQYEGILRRRKARAKAELER. The segment at residues 205-230 is a DNA-binding region (NFYA/HAP2-type); that stretch reads KPYLHESRHKHAMRRARASGGRFAKK. The interval 206–272 is disordered; it reads PYLHESRHKH…NETLNSSGAP (67 aa). Positions 211-221 are enriched in basic residues; that stretch reads SRHKHAMRRAR. The span at 229–247 shows a compositional bias: basic and acidic residues; it reads KKSEVEAGEDAGGRDRERG. 2 stretches are compositionally biased toward polar residues: residues 248–257 and 263–272; these read SATNSSGSEQ and NETLNSSGAP.

The protein belongs to the NFYA/HAP2 subunit family. As to quaternary structure, heterotrimeric transcription factor composed of three components, NF-YA, NF-YB and NF-YC. NF-YB and NF-YC must interact and dimerize for NF-YA association and DNA binding. As to expression, ubiquitous.

Its subcellular location is the nucleus. Its function is as follows. Stimulates the transcription of various genes by recognizing and binding to a CCAAT motif in promoters. The polypeptide is Nuclear transcription factor Y subunit A-1 (NFYA1) (Arabidopsis thaliana (Mouse-ear cress)).